A 353-amino-acid chain; its full sequence is Photosystem II protein D1 (353 aa).

Residue Thr-2 is modified to N-acetylthreonine. The residue at position 2 (Thr-2) is a Phosphothreonine. 3 helical membrane passes run 29-46 (YIGW…TATS), 118-133 (HFFI…EWEL), and 142-156 (WIAV…AATA). His-118 lines the chlorophyll a pocket. Tyr-126 is a pheophytin a binding site. [CaMn4O5] cluster contacts are provided by Asp-170 and Glu-189. A helical membrane pass occupies residues 197-218 (FHMLGVAGVFGGSLFSAMHGSL). His-198 contributes to the chlorophyll a binding site. Residues His-215 and 264–265 (SF) contribute to the a quinone site. Fe cation is bound at residue His-215. Residue His-272 coordinates Fe cation. The helical transmembrane segment at 274-288 (FLAIWPVVGIWFTAL) threads the bilayer. His-332, Glu-333, Asp-342, and Ala-344 together coordinate [CaMn4O5] cluster. A propeptide spanning residues 345 to 353 (SVEAPSING) is cleaved from the precursor.

The protein belongs to the reaction center PufL/M/PsbA/D family. In terms of assembly, PSII is composed of 1 copy each of membrane proteins PsbA, PsbB, PsbC, PsbD, PsbE, PsbF, PsbH, PsbI, PsbJ, PsbK, PsbL, PsbM, PsbT, PsbX, PsbY, PsbZ, Psb30/Ycf12, at least 3 peripheral proteins of the oxygen-evolving complex and a large number of cofactors. It forms dimeric complexes. The D1/D2 heterodimer binds P680, chlorophylls that are the primary electron donor of PSII, and subsequent electron acceptors. It shares a non-heme iron and each subunit binds pheophytin, quinone, additional chlorophylls, carotenoids and lipids. D1 provides most of the ligands for the Mn4-Ca-O5 cluster of the oxygen-evolving complex (OEC). There is also a Cl(-1) ion associated with D1 and D2, which is required for oxygen evolution. The PSII complex binds additional chlorophylls, carotenoids and specific lipids. serves as cofactor. Tyr-161 forms a radical intermediate that is referred to as redox-active TyrZ, YZ or Y-Z. In terms of processing, C-terminally processed by CTPA; processing is essential to allow assembly of the oxygen-evolving complex and thus photosynthetic growth.

The protein resides in the plastid. It is found in the chloroplast thylakoid membrane. It carries out the reaction 2 a plastoquinone + 4 hnu + 2 H2O = 2 a plastoquinol + O2. In terms of biological role, photosystem II (PSII) is a light-driven water:plastoquinone oxidoreductase that uses light energy to abstract electrons from H(2)O, generating O(2) and a proton gradient subsequently used for ATP formation. It consists of a core antenna complex that captures photons, and an electron transfer chain that converts photonic excitation into a charge separation. The D1/D2 (PsbA/PsbD) reaction center heterodimer binds P680, the primary electron donor of PSII as well as several subsequent electron acceptors. The polypeptide is Photosystem II protein D1 (Stigeoclonium helveticum (Green alga)).